Here is a 347-residue protein sequence, read N- to C-terminus: Selenide, water dikinase (347 aa).

Residue C17 is part of the active site. ATP is bound by residues K20 and 48–50 (TRD). Position 51 (D51) interacts with Mg(2+). ATP-binding positions include D68, D91, and 139-141 (GHS). D91 provides a ligand contact to Mg(2+). Residue D227 participates in Mg(2+) binding.

Belongs to the selenophosphate synthase 1 family. Class I subfamily. As to quaternary structure, homodimer. Mg(2+) serves as cofactor.

It catalyses the reaction hydrogenselenide + ATP + H2O = selenophosphate + AMP + phosphate + 2 H(+). In terms of biological role, synthesizes selenophosphate from selenide and ATP. In Shigella flexneri serotype 5b (strain 8401), this protein is Selenide, water dikinase.